The sequence spans 67 residues: Conotoxin TxMMSK-01 (67 aa).

A signal peptide spans 1-20; the sequence is MMSKLGVLLITCLLLFPLTA. Positions 21 to 53 are excised as a propeptide; it reads VPLDGDQPADQPAERLQDDISSENHPFFDPVKR. Intrachain disulfides connect Cys54–Cys66, Cys55–Cys62, and Cys59–Cys65. Pro64 bears the 4-hydroxyproline mark. Cys66 is subject to Cysteine amide.

The protein belongs to the conotoxin M superfamily. In terms of tissue distribution, expressed by the venom duct.

The protein localises to the secreted. The polypeptide is Conotoxin TxMMSK-01 (Conus textile (Cloth-of-gold cone)).